A 713-amino-acid chain; its full sequence is Cyclomaltodextrin glucanotransferase (713 aa).

The signal sequence occupies residues 1–27; that stretch reads MKKISKLTTALALSLSLALSLLGPAHA. Residues 28-165 are A1; it reads APDTSVSNKQ…NIKVIIDFAP (138 aa). Ca(2+)-binding residues include D54, N56, N59, and N60. C70 and C77 are oxidised to a cystine. G78 and D80 together coordinate Ca(2+). Residue 127–128 coordinates substrate; that stretch reads YW. Residue N166 participates in Ca(2+) binding. The interval 166-229 is b; sequence NHTSPASLDQ…NLYDLADLNH (64 aa). Position 167 (H167) interacts with substrate. I217 serves as a coordination point for Ca(2+). 220–223 provides a ligand contact to substrate; the sequence is NLYD. D226 lines the Ca(2+) pocket. Residues 230 to 433 form an A2 region; it reads NNSTVDTYLK…LRKSNPAIAY (204 aa). R254 is a binding site for substrate. The Nucleophile role is filled by D256. 259-260 is a binding site for substrate; sequence KH. A Ca(2+)-binding site is contributed by H260. The active-site Proton donor is E284. 3 residues coordinate substrate: H354, D398, and R402. Positions 434–522 are c; sequence GTTQERWINN…GTAVWQYTTA (89 aa). The segment at 523-609 is d; the sequence is VTAPTIGHVG…SNVHDNFEVL (87 aa). Positions 526-607 constitute an IPT/TIG domain; that stretch reads PTIGHVGPMM…TSSNVHDNFE (82 aa). Residues 608 to 713 form the CBM20 domain; the sequence is VLSGDQVSVR…TATINVNWQP (106 aa). Positions 610 to 713 are e; that stretch reads SGDQVSVRFV…TATINVNWQP (104 aa).

This sequence belongs to the glycosyl hydrolase 13 family. As to quaternary structure, monomer. Ca(2+) serves as cofactor.

The protein resides in the secreted. It carries out the reaction Cyclizes part of a (1-&gt;4)-alpha-D-glucan chain by formation of a (1-&gt;4)-alpha-D-glucosidic bond.. This Bacillus sp. (strain 17-1) protein is Cyclomaltodextrin glucanotransferase (cgt).